The chain runs to 250 residues: NADH-quinone oxidoreductase subunit C (250 aa).

This sequence belongs to the complex I 30 kDa subunit family. NDH-1 is composed of 14 different subunits. Subunits NuoB, C, D, E, F, and G constitute the peripheral sector of the complex.

The protein localises to the cell inner membrane. The catalysed reaction is a quinone + NADH + 5 H(+)(in) = a quinol + NAD(+) + 4 H(+)(out). Its function is as follows. NDH-1 shuttles electrons from NADH, via FMN and iron-sulfur (Fe-S) centers, to quinones in the respiratory chain. The immediate electron acceptor for the enzyme in this species is believed to be ubiquinone. Couples the redox reaction to proton translocation (for every two electrons transferred, four hydrogen ions are translocated across the cytoplasmic membrane), and thus conserves the redox energy in a proton gradient. This chain is NADH-quinone oxidoreductase subunit C, found in Xanthomonas euvesicatoria pv. vesicatoria (strain 85-10) (Xanthomonas campestris pv. vesicatoria).